A 1291-amino-acid chain; its full sequence is Histone-lysine N-methyltransferase SETDB1 (1291 aa).

Residues 18-64 (ESEEIAELQQAVVEELGISMEELRHFIDEELEKMDCVQQRKKQLAEL) adopt a coiled-coil conformation. Residues 108-147 (RDSSSEDESSRPTEIIEIPDEDDDVLSIDSGDAGSRTPKD) form a disordered region. S112 and S117 each carry phosphoserine. Residue T120 is modified to Phosphothreonine. The segment covering 124 to 133 (EIPDEDDDVL) has biased composition (acidic residues). Residue K182 forms a Glycyl lysine isopeptide (Lys-Gly) (interchain with G-Cter in SUMO2); alternate linkage. K182 participates in a covalent cross-link: Glycyl lysine isopeptide (Lys-Gly) (interchain with G-Cter in ubiquitin); alternate. Tudor domains lie at 257-320 (KLYV…LKKT) and 347-403 (LLKS…SMKT). Residues 404–545 (SSASALEKKQ…APAPSALPAP (142 aa)) are disordered. Polar residues predominate over residues 433-444 (QYTQDLTGTGTQ). Over residues 448 to 468 (VEPPQPTAPPAPPFPPAPPLS) the composition is skewed to pro residues. The segment covering 477-515 (ESQLAQSRKQVAKKSTSFRPGSVGSGHSSPTSPALSENV) has biased composition (polar residues). Positions 528-539 (SPLGSTASAPAP) are enriched in low complexity. The MBD domain occupies 594–665 (YRGKNPLLVP…EMFCLDPYVL (72 aa)). The 74-residue stretch at 727 to 800 (VGCDCKDGCR…MCTNRLVQHG (74 aa)) folds into the Pre-SET domain. Residues C729, C731, C735, C741, C743, C781, C785, C787, and C792 each coordinate Zn(2+). The region spanning 803 to 1266 (VRLQLFKTQN…AGTELTWDYN (464 aa)) is the SET domain. S-adenosyl-L-methionine is bound by residues 813–815 (KGW), D851, and Y853. K867 is covalently cross-linked (Glycyl lysine isopeptide (Lys-Gly) (interchain with G-Cter in ubiquitin)). Positions 868 to 1160 (EGYESDAPCS…MTGPMKRQVA (293 aa)) are disordered. Residues 896–907 (EDPEESNDDSSD) show a composition bias toward acidic residues. Over residues 951-963 (DLGPPHIPVPPSI) the composition is skewed to pro residues. Phosphoserine is present on S1025. Residues 1031–1050 (IKDEGDIKQAKKEDTDDRNK) show a composition bias toward basic and acidic residues. A Glycyl lysine isopeptide (Lys-Gly) (interchain with G-Cter in SUMO2); alternate cross-link involves residue K1032. Residue K1032 forms a Glycyl lysine isopeptide (Lys-Gly) (interchain with G-Cter in SUMO1); alternate linkage. A Glycyl lysine isopeptide (Lys-Gly) (interchain with G-Cter in SUMO2) cross-link involves residue K1038. Residues 1052–1063 (SVVTESSRNYGY) are compositionally biased toward polar residues. S1066 carries the post-translational modification Phosphoserine. K1069 participates in a covalent cross-link: Glycyl lysine isopeptide (Lys-Gly) (interchain with G-Cter in SUMO2). Residues 1100–1115 (LTLSSSTESEGESGTS) show a composition bias toward low complexity. A compositionally biased stretch (polar residues) spans 1116–1140 (RKPTAGQTSATAVDSDDIQTISSGS). K1149 is covalently cross-linked (Glycyl lysine isopeptide (Lys-Gly) (interchain with G-Cter in SUMO2)). An N6,N6,N6-trimethyllysine; alternate mark is found at K1170 and K1178. Residues K1170 and K1178 each carry the N6,N6-dimethyllysine; alternate modification. Residues R1220 and 1223 to 1224 (NH) contribute to the S-adenosyl-L-methionine site. Zn(2+)-binding residues include C1226, C1279, C1281, and C1286. Residues 1275-1291 (KELLCCCGAIECRGRLL) form the Post-SET domain.

The protein belongs to the class V-like SAM-binding methyltransferase superfamily. Histone-lysine methyltransferase family. Suvar3-9 subfamily. As to quaternary structure, part of a complex containing at least CDYL, REST, WIZ, SETDB1, EHMT1 and EHMT2. Forms a complex with ATRX, TRIM28 and ZNF274. Probably part of a corepressor complex containing ZNF304, TRIM28, SETDB1 and DNMT1. Interacts with TRIM28/TIF1B. Interacts with ATF7IP and ATF7IP2; the interaction with ATF7IP protects SETDB1 from proteasomal degradation and is required to stimulate histone methyltransferase activity and facilitate the conversion of dimethylated to trimethylated H3 'Lys-9'. Interacts with CBX1 and CBX5. Interacts with DNMT3A and DNMT3B. Interacts with SUMO2. Interacts with MPHOSPH8. Interacts with ERG. Interacts with HDAC1, HDAC2, SIN3A and SIN3B. Interacts with ATRX. Interacts with RESF1. Interacts with ZNF638. Interacts with TASOR. Interacts with ZNF263; recruited to the SIX3 promoter along with other proteins involved in chromatin modification and transcriptional corepression where it contributes to transcriptional repression. Interacts with PHF13; the interaction probably enhances SETDB1 chromatin-associated levels and activity. Interacts with VRK1. Degraded by the proteasome, shielded by interaction with ATF7IP. In terms of processing, monoubiquitinated at Lys-867 by E2 enzymes of the UBE2E family. The conjugated-Ub is protected from deubiquitination by the SET domain. Monoubiquitination at Lys-867 is required for catalytic activity, H3K9 methylation and endogenous retrovirus silencing. In terms of tissue distribution, widely expressed. High expression in testis.

It is found in the nucleus. The protein localises to the cytoplasm. The protein resides in the chromosome. It carries out the reaction N(6),N(6)-dimethyl-L-lysyl(9)-[histone H3] + S-adenosyl-L-methionine = N(6),N(6),N(6)-trimethyl-L-lysyl(9)-[histone H3] + S-adenosyl-L-homocysteine + H(+). Functionally, histone methyltransferase that specifically trimethylates 'Lys-9' of histone H3. H3 'Lys-9' trimethylation represents a specific tag for epigenetic transcriptional repression by recruiting HP1 (CBX1, CBX3 and/or CBX5) proteins to methylated histones. Mainly functions in euchromatin regions, thereby playing a central role in the silencing of euchromatic genes. H3 'Lys-9' trimethylation is coordinated with DNA methylation. Required for HUSH-mediated heterochromatin formation and gene silencing. Forms a complex with MBD1 and ATF7IP that represses transcription and couples DNA methylation and histone 'Lys-9' trimethylation. Its activity is dependent on MBD1 and is heritably maintained through DNA replication by being recruited by CAF-1. SETDB1 is targeted to histone H3 by TRIM28/TIF1B, a factor recruited by KRAB zinc-finger proteins. Probably forms a corepressor complex required for activated KRAS-mediated promoter hypermethylation and transcriptional silencing of tumor suppressor genes (TSGs) or other tumor-related genes in colorectal cancer (CRC) cells. Required to maintain a transcriptionally repressive state of genes in undifferentiated embryonic stem cells (ESCs). In ESCs, in collaboration with TRIM28, is also required for H3K9me3 and silencing of endogenous and introduced retroviruses in a DNA-methylation independent-pathway. Associates at promoter regions of tumor suppressor genes (TSGs) leading to their gene silencing. The SETDB1-TRIM28-ZNF274 complex may play a role in recruiting ATRX to the 3'-exons of zinc-finger coding genes with atypical chromatin signatures to establish or maintain/protect H3K9me3 at these transcriptionally active regions. The polypeptide is Histone-lysine N-methyltransferase SETDB1 (Homo sapiens (Human)).